The chain runs to 214 residues: MRYLTIALSKGRLTDMSVEIFEKIGIDCTELKSSTRKLILSDEKNKIKFFLAKPADVPTYVEYGAADIGIVGKDTLLEEGRNLYEVLDLGFAACRMALAGPAELQGKIDELNIKRVGTKYPNITRNYFEKTRRESVEIIKLNGSVELAPLVGLSEVIVDLVESGRTLKENGLVVLDTIADISARMVVNRVSMKMENERIQKIIDGVRDELSVRG.

Belongs to the ATP phosphoribosyltransferase family. Short subfamily. In terms of assembly, heteromultimer composed of HisG and HisZ subunits.

The protein localises to the cytoplasm. The catalysed reaction is 1-(5-phospho-beta-D-ribosyl)-ATP + diphosphate = 5-phospho-alpha-D-ribose 1-diphosphate + ATP. It participates in amino-acid biosynthesis; L-histidine biosynthesis; L-histidine from 5-phospho-alpha-D-ribose 1-diphosphate: step 1/9. Catalyzes the condensation of ATP and 5-phosphoribose 1-diphosphate to form N'-(5'-phosphoribosyl)-ATP (PR-ATP). Has a crucial role in the pathway because the rate of histidine biosynthesis seems to be controlled primarily by regulation of HisG enzymatic activity. The polypeptide is ATP phosphoribosyltransferase (Ruminiclostridium cellulolyticum (strain ATCC 35319 / DSM 5812 / JCM 6584 / H10) (Clostridium cellulolyticum)).